A 419-amino-acid chain; its full sequence is CinA-like protein (419 aa).

The protein belongs to the CinA family.

The polypeptide is CinA-like protein (Picosynechococcus sp. (strain ATCC 27264 / PCC 7002 / PR-6) (Agmenellum quadruplicatum)).